Consider the following 197-residue polypeptide: RNA pyrophosphohydrolase (197 aa).

The Nudix hydrolase domain maps to 6-149 (GYRPNVGIVI…KRDVYRRAMK (144 aa)). The Nudix box motif lies at 38–59 (GGINEGETPEQAMFRELFEEVG). Residues 170–197 (ETKKAETGKKQPYYHKYAPQNKKGRKRR) are disordered.

This sequence belongs to the Nudix hydrolase family. RppH subfamily. The cofactor is a divalent metal cation.

Its function is as follows. Accelerates the degradation of transcripts by removing pyrophosphate from the 5'-end of triphosphorylated RNA, leading to a more labile monophosphorylated state that can stimulate subsequent ribonuclease cleavage. The chain is RNA pyrophosphohydrolase from Actinobacillus succinogenes (strain ATCC 55618 / DSM 22257 / CCUG 43843 / 130Z).